Here is a 176-residue protein sequence, read N- to C-terminus: Ribosome maturation factor RimM (176 aa).

The PRC barrel domain maps to 101-174; it reads EGHYYIYQLL…EIRVELPPGL (74 aa).

The protein belongs to the RimM family. As to quaternary structure, binds ribosomal protein uS19.

It is found in the cytoplasm. In terms of biological role, an accessory protein needed during the final step in the assembly of 30S ribosomal subunit, possibly for assembly of the head region. Essential for efficient processing of 16S rRNA. May be needed both before and after RbfA during the maturation of 16S rRNA. It has affinity for free ribosomal 30S subunits but not for 70S ribosomes. This Moorella thermoacetica (strain ATCC 39073 / JCM 9320) protein is Ribosome maturation factor RimM.